A 243-amino-acid polypeptide reads, in one-letter code: Homeobox protein goosecoid isoform A (243 aa).

A DNA-binding region (homeobox) is located at residues 148–207 (KRRHRTIFTDEQLEALENLFQETKYPDVGTREQLARRVHLREEKVEVWFKNRRAKWRRQK). The segment at 201-243 (AKWRRQKRSSSEESENAQKWNKSSKNSAEKADEQVKSDLDSDS) is disordered. The segment covering 217–226 (AQKWNKSSKN) has biased composition (polar residues). Residues 227–243 (SAEKADEQVKSDLDSDS) are compositionally biased toward basic and acidic residues.

Belongs to the paired homeobox family. Bicoid subfamily. At the start of gastrulation, it is found in a patch of cells encompassing 60 degrees of arc on the dorsal marginal zone.

It is found in the nucleus. Its function is as follows. Plays a central role in executing Spemann's organizer phenomenon (the dorsal blastopore lip of the early Xenopus laevis gastrula can organize a complete secondary body axis when transplanted to another embryo). The sequence is that of Homeobox protein goosecoid isoform A (gsc-a) from Xenopus laevis (African clawed frog).